The following is an 83-amino-acid chain: U-actitoxin-Avd8d (83 aa).

The signal sequence occupies residues Met1–Gln19. Positions Val20–Thr38 are excised as a propeptide.

It belongs to the sea anemone 8 toxin family.

Its subcellular location is the secreted. The protein localises to the nematocyst. The protein is U-actitoxin-Avd8d of Anemonia viridis (Snakelocks anemone).